Consider the following 543-residue polypeptide: Capsid vertex component 2 (543 aa).

Residues 1 to 54 (MWKLEKKYILRQNPSVFLNGTAFWTPHPQNILHIDRNSLRETKKNASLYRTRLL) are interaction with major capsid protein/MCP. Residues 101 to 120 (SPQLLPSPPKPLSPTTQSQP) form a disordered region.

This sequence belongs to the herpesviridae CVC2 protein family. As to quaternary structure, heterodimerizes with CVC1. Interacts with major capsid protein/MCP and triplex capsid protein 1/TRX1 at the pentamer vertices. Interacts with the large tegument protein/LTP.

The protein localises to the virion. It is found in the host nucleus. In terms of biological role, capsid vertex-specific component that plays a role during viral DNA encapsidation, assuring correct genome cleavage and presumably stabilizing capsids that contain full-length viral genomes. Participates in the interaction between the capsid and the tegument through interaction with the large tegument protein/LTP. The polypeptide is Capsid vertex component 2 (Saimiri sciureus (Common squirrel monkey)).